Here is a 146-residue protein sequence, read N- to C-terminus: UPF0178 protein BAMEG_1545 (146 aa).

It belongs to the UPF0178 family.

In Bacillus anthracis (strain CDC 684 / NRRL 3495), this protein is UPF0178 protein BAMEG_1545.